Consider the following 49-residue polypeptide: MRVNVTLACTECGDRNYISTKNKRTNPERVEMKKYCSRDNKHTLHRETK.

Belongs to the bacterial ribosomal protein bL33 family.

In Staphylococcus haemolyticus (strain JCSC1435), this protein is Large ribosomal subunit protein bL33A.